Consider the following 142-residue polypeptide: Large ribosomal subunit protein uL13 (142 aa).

This sequence belongs to the universal ribosomal protein uL13 family. As to quaternary structure, part of the 50S ribosomal subunit.

This protein is one of the early assembly proteins of the 50S ribosomal subunit, although it is not seen to bind rRNA by itself. It is important during the early stages of 50S assembly. The chain is Large ribosomal subunit protein uL13 from Histophilus somni (Haemophilus somnus).